Reading from the N-terminus, the 147-residue chain is UPF0735 ACT domain-containing protein BH1214 (147 aa).

The ACT domain occupies 70–145 (TLSINLEDRS…AVEKVELVGS (76 aa)).

The protein belongs to the UPF0735 family.

The polypeptide is UPF0735 ACT domain-containing protein BH1214 (Halalkalibacterium halodurans (strain ATCC BAA-125 / DSM 18197 / FERM 7344 / JCM 9153 / C-125) (Bacillus halodurans)).